Here is an 80-residue protein sequence, read N- to C-terminus: Conotoxin VnMSGL-0123 (80 aa).

The first 20 residues, 1–20 (MSGLGIMVLTLLLLVSMATS), serve as a signal peptide directing secretion. Residues 21 to 44 (HQDGGGKQATQRDAINVRRRRSIT) constitute a propeptide that is removed on maturation. 3 disulfide bridges follow: C53/C65, C57/C74, and C64/C78. F79 carries the phenylalanine amide modification.

The protein belongs to the conotoxin O3 superfamily. In terms of tissue distribution, expressed by the venom duct.

The protein localises to the secreted. The protein is Conotoxin VnMSGL-0123 of Conus ventricosus (Mediterranean cone).